A 629-amino-acid chain; its full sequence is Filament-like plant protein 2 (629 aa).

Coiled-coil stretches lie at residues W34–R61 and N102–E171. Residues S186–S205 are disordered. A compositionally biased stretch (basic and acidic residues) spans S193–E203. Residues E270 to E493 are a coiled coil.

Belongs to the FPP family. In terms of assembly, interacts with WPP/MAF proteins. Binds to COG2; this interaction promotes the association between cortical microtubules and EXO70A1. Accumulates in preferentially xylem cells.

It localises to the vesicle. Functionally, ensures, when in complex with FPP3/VETH1 and COG2, the correct secondary cell wall (SCW) deposition pattern by recruiting exocyst components to cortical microtubules in xylem cells during secondary cell wall deposition by recruiting EXO70A1. The polypeptide is Filament-like plant protein 2 (Arabidopsis thaliana (Mouse-ear cress)).